The sequence spans 513 residues: Bifunctional purine biosynthesis protein PurH (513 aa).

Residues 1 to 144 form the MGS-like domain; sequence MSKRALISVS…KNHERVGIVV (144 aa).

It belongs to the PurH family.

The catalysed reaction is (6R)-10-formyltetrahydrofolate + 5-amino-1-(5-phospho-beta-D-ribosyl)imidazole-4-carboxamide = 5-formamido-1-(5-phospho-D-ribosyl)imidazole-4-carboxamide + (6S)-5,6,7,8-tetrahydrofolate. It catalyses the reaction IMP + H2O = 5-formamido-1-(5-phospho-D-ribosyl)imidazole-4-carboxamide. Its pathway is purine metabolism; IMP biosynthesis via de novo pathway; 5-formamido-1-(5-phospho-D-ribosyl)imidazole-4-carboxamide from 5-amino-1-(5-phospho-D-ribosyl)imidazole-4-carboxamide (10-formyl THF route): step 1/1. It functions in the pathway purine metabolism; IMP biosynthesis via de novo pathway; IMP from 5-formamido-1-(5-phospho-D-ribosyl)imidazole-4-carboxamide: step 1/1. The polypeptide is Bifunctional purine biosynthesis protein PurH (Moorella thermoacetica (strain ATCC 39073 / JCM 9320)).